We begin with the raw amino-acid sequence, 290 residues long: Shikimate dehydrogenase (NADP(+)) (290 aa).

Residues 24–26 (SLS) and Thr-71 each bind shikimate. The active-site Proton acceptor is the Lys-75. Shikimate is bound by residues Asn-96 and Asp-111. NADP(+) contacts are provided by residues 136–140 (GAGGA), 160–165 (NRTVDR), and Leu-233. Position 235 (Tyr-235) interacts with shikimate. Gly-256 contacts NADP(+).

Belongs to the shikimate dehydrogenase family. Homodimer.

The catalysed reaction is shikimate + NADP(+) = 3-dehydroshikimate + NADPH + H(+). It participates in metabolic intermediate biosynthesis; chorismate biosynthesis; chorismate from D-erythrose 4-phosphate and phosphoenolpyruvate: step 4/7. Its function is as follows. Involved in the biosynthesis of the chorismate, which leads to the biosynthesis of aromatic amino acids. Catalyzes the reversible NADPH linked reduction of 3-dehydroshikimate (DHSA) to yield shikimate (SA). The protein is Shikimate dehydrogenase (NADP(+)) of Methanopyrus kandleri (strain AV19 / DSM 6324 / JCM 9639 / NBRC 100938).